A 162-amino-acid polypeptide reads, in one-letter code: uncharacterized protein (162 aa).

The first 19 residues, 1–19 (MARVYILFFSVFFVFPLFS), serve as a signal peptide directing secretion. The next 2 helical transmembrane spans lie at 53–75 (LSIGAFPIVTLLSFITYDIIRLI) and 105–127 (IVFGVAVGISVTIGLIDVTYRAV).

It is found in the cell membrane. This is an uncharacterized protein from Treponema pallidum (strain Nichols).